Reading from the N-terminus, the 421-residue chain is MSTTKPICLVPLHVVIVGAGIGGLSAAVALANRGHSVLILESTSELSHVGAGVALPPTTRKWYESEGVLQVDDTACVPLEGIEITKWDTGELVTRTAANPAGKQTAIHHGDMQLALLARARELTNVEIRLGARVVDVDLEATVALLADGQRVAGDLIIAADGVKSTLKAKVCPPEAVVPLPTGEAAYRFTLPRELLESDAELRELVQRPWGVRWDGPSCHVVAYPLRNHRLLNVVLIHPDNGDAKESWTSVTDKQNVLADYQGWNPTLLKLIALAPPEVPNFRMFLYSPAPVWVKGSTILLGDSCHAMLPYLGQGVAQAVEDATAIATVLSLIETRKQLPLALRAYESSRKERVDQIQAATYRAREQLHLRDGDAQAARDSQRKATSGTGQNSDVVKMQQSYWTWDAAGVAEKTLAALIIA.

A helical membrane pass occupies residues 9–29; it reads LVPLHVVIVGAGIGGLSAAVA. Residues glutamate 41 and alanine 54 each coordinate FAD. Arginine 188 is an active-site residue. FAD contacts are provided by aspartate 303 and valine 316. The interval 371-392 is disordered; the sequence is RDGDAQAARDSQRKATSGTGQN.

This sequence belongs to the paxM FAD-dependent monooxygenase family. The cofactor is FAD.

The protein resides in the membrane. Its pathway is secondary metabolite biosynthesis; terpenoid biosynthesis. FAD-dependent monooxygenase; part of the gene cluster that mediates the biosynthesis of the meroterpenoids arthripenoids. The pathway begins with the HR-PKS atnH that catalyzes two chain-extension steps to form a reduced triketide, which then primes the SAT domain in the NR-PKS atnG to initiate three more cycles of extension to give a linear hexaketide corresponding to the polyketide part of arthripenoids. The FAD-dependent monooxygenase atnJ then performs an oxidative decarboxylation at C11 of the atnH/atnG product, via an electrophilic aromatic hydroxylation with concomitant ipso-decarboxylation. The membrane-bound polyprenyl transferase atnF then introduces a farnesyl group before the FAD-dependent monooxygenase atnK functions as the first epoxidase on terminal C12'-C13' olefin, followed by a second epoxidation on C7'-C8' catalyzed by atnA. The terpene cyclase/mutase atnI then initiates the sequential tricyclic ring formation through protonation of the terminal epoxide and catalyzes the regioselective and stereoselective 6/6/6-tricyclic ring formation. The cytochrome P450 monooxygenase atnM is responsible for hydroxylating both C1' and C10'. The next steps may involve ketoreduction and acetyl transfer by the ketoreductase atnB and the acetyltransferase atnC, and lead to the production of arthripenoid B, the final biosynthetic product of the atn cluster. The hydroquinone moiety in arthripenoid B is prone to undergo spontaneous oxidation to afford a benzoquinone compound, a key intermediate for generating structure diversity. For instance, addition of a cysteine followed by ring contraction gives arthripenoid A, tautomerization gives the main product arthripenoid C, addition of a molecular of water or amine affords arthripenoid D or E, respectively, and loss of one water forms arthripenoid F. The sequence is that of FAD-dependent monooxygenase atnJ from Arthrinium sp.